Here is a 687-residue protein sequence, read N- to C-terminus: MQNDRSRWKTEGHSSEVHEDFLRNSVQRRNQLEKILFSYNNLHRLDPSYGEIVQRAFESNDPIALWNFENEVLLNSKDVDDLMQQQFAAPVQNNQCPNPYQNCGYQNNLVSTLDASFKVHPFAQHGNYMPPPAQFASNPNVFPQPVPPYTMDLAASNSGFAHPQIVNQPMHPHVPVGSQNYNPPQFVPAPPTMMPVGAVMVSQGSYSMSPPQIDTSKPPSGYGFSSPIFPSPSYSQYSGPPANEGFPDIIYDNNGVAYCRVVSAPVCVVSMSQSGSSVCSSQSFSSGQSDISMSSRPPINGSSVGNGSLSPMTDSVREESEDEDYGTLTPVGQQDCDLDSVDTESVANEPEPYSSTMSEMPPLDDVDDIMENLDLSKTLIEPETLEHSDNMSVVEIKSEPVSEMTTDSLIVDDDRDTSISEIIKYLDTSDDVLESWQEATGRKKCFVPQKTQKLVYPLPLSKVEKPLQKCQQTLAASTIDEDSKEASTIALPDARKKLTKKEKRLMAAQKANQLETDDDVLEAAYRERQKHVEQAGGDYSSSGQKDQKKKRGKRPVSNPPPSLISPQILHAVQMAIANRAKKISESGRPIFHENFSYQKFYETVDTFVKTWEENSNEMNKVLQFIEKRILAFKMVQRPQSLSRITIYEQLQLNLPPAILPELCFLAGLTSDSTDKLEYYEEIFFNLF.

A compositionally biased stretch (low complexity) spans 277–295 (SVCSSQSFSSGQSDISMSS). Disordered stretches follow at residues 277–337 (SVCS…QDCD), 342–361 (DTESVANEPEPYSSTMSEMP), and 531–564 (HVEQAGGDYSSSGQKDQKKKRGKRPVSNPPPSLI). A compositionally biased stretch (polar residues) spans 300 to 313 (NGSSVGNGSLSPMT).

This is an uncharacterized protein from Caenorhabditis elegans.